Reading from the N-terminus, the 83-residue chain is Cytochrome b559 subunit alpha (83 aa).

The chain crosses the membrane as a helical span at residues 21–35; the sequence is IIHTITVPMLFLAGW. Heme is bound at residue His-23.

It belongs to the PsbE/PsbF family. As to quaternary structure, heterodimer of an alpha subunit and a beta subunit. PSII is composed of 1 copy each of membrane proteins PsbA, PsbB, PsbC, PsbD, PsbE, PsbF, PsbH, PsbI, PsbJ, PsbK, PsbL, PsbM, PsbT, PsbX, PsbY, PsbZ, Psb30/Ycf12, peripheral proteins PsbO, CyanoQ (PsbQ), PsbU, PsbV and a large number of cofactors. It forms dimeric complexes. The cofactor is heme b.

It is found in the cellular thylakoid membrane. Functionally, this b-type cytochrome is tightly associated with the reaction center of photosystem II (PSII). PSII is a light-driven water:plastoquinone oxidoreductase that uses light energy to abstract electrons from H(2)O, generating O(2) and a proton gradient subsequently used for ATP formation. It consists of a core antenna complex that captures photons, and an electron transfer chain that converts photonic excitation into a charge separation. This is Cytochrome b559 subunit alpha from Acaryochloris marina (strain MBIC 11017).